We begin with the raw amino-acid sequence, 815 residues long: MGSDKRVSRTERSGRYGSIIDRDDRDERESRSRRRDSDYKRSSDDRRGDRYDDYRDYDSPERERERRNSDRSEDGYHSDGDYGEHDYRHDISDERESKTIMLRGLPITITESDIREMMESFEGPQPADVRLMKRKTGVSRGFAFVEFYHLQDATSWMEANQKKLVIQGKHIAMHYSNPRPKFEDWLCNKCCLNNFRKRLKCFRCGADKFDSEQEVPPGTTESAQSVDYYCDTIILRNIAPHTVVDSIMTALSPYASLAVNNIRLIKDKQTQQNRGFAFVQLSSAMDASQLLQILQSLHPPLKIDGKTIGVDFAKSARKDLVLPDGNRVSAFSVASTAIAAAQWSSTQSQSGEGGSVDYSYMQPGQDGYTQYTQYSQDYQQFYQQQAGGLESDTSATSGTTVTTTSAAVVSQSPQLYNQTSNPPGSPTEEAQPSTSTSTQAPAASPTGVVPGTKYAVPDTSTYQYDESSGYYYDPTTGLYYDPNSQYYYNSLTQQYLYWDGEKETYVPAAEASSNQQTGLPSTKEGKEKKEKPKSKTAQQIAKDMERWAKSLNKQKENFKNSFQPVNSLREEERRESAAADAGFALFEKKGALAERQQLLPELVRNGDEENPLKRGLVAAYSGDSDNEEELVERLESEEEKLADWKKMACLLCRRQFPNRDALVRHQQLSDLHKQNMDIYRRSRLSEQELEALELREREMKYRDRAAERREKYGIPEPPEPKRKKQFDAGTVNYEQPTKDGIDHSNIGNKMLQAMGWREGSGLGRKCQGITAPIEAQVRLKGAGLGAKGSAYGLSGADSYKDAVRKAMFARFTEME.

Residues 1–93 (MGSDKRVSRT…EHDYRHDISD (93 aa)) are disordered. Ser-18, Ser-59, Ser-69, Ser-72, and Ser-78 each carry phosphoserine. Residues 98–178 (KTIMLRGLPI…KHIAMHYSNP (81 aa)) form the RRM 1 domain. The RanBP2-type zinc-finger motif lies at 181–210 (KFEDWLCNKCCLNNFRKRLKCFRCGADKFD). Positions 231 to 315 (DTIILRNIAP…KTIGVDFAKS (85 aa)) constitute an RRM 2 domain. A required for interaction with U2AF2 region spans residues 321-809 (VLPDGNRVSA…KDAVRKAMFA (489 aa)). 2 disordered regions span residues 385–468 (QAGG…DESS) and 508–539 (AAEASSNQQTGLPSTKEGKEKKEKPKSKTAQQ). A compositionally biased stretch (low complexity) spans 393-410 (TSATSGTTVTTTSAAVVS). Over residues 411 to 422 (QSPQLYNQTSNP) the composition is skewed to polar residues. Positions 426-446 (PTEEAQPSTSTSTQAPAASPT) are enriched in low complexity. The residue at position 444 (Ser-444) is a Phosphoserine. The sufficient for interaction with ACIN1, PRPF8, SFRS3, SNRPB, SNRPN, SNRNP70 and SNRNP200 stretch occupies residues 452-535 (TKYAVPDTST…KEKKEKPKSK (84 aa)). Ser-621 and Ser-624 each carry phosphoserine. A C2H2-type zinc finger spans residues 647–672 (MACLLCRRQFPNRDALVRHQQLSDLH). The region spanning 743–789 (HSNIGNKMLQAMGWREGSGLGRKCQGITAPIEAQVRLKGAGLGAKGS) is the G-patch domain.

This sequence belongs to the RBM5/RBM10 family. As to quaternary structure, component of the spliceosome A complex (also known as the prespliceosome). Appears to dissociate from the spliceosome upon formation of the spliceosome B complex (also known as the precatalytic spliceosome), in which the heterotrimeric U4/U6.U5 snRNPs are bound. Interacts with U2AF2; this interaction is direct. Also interacts with ACIN1, PRPF8, SFRS3, SNRPB, SNRPN, SNRNP70 and SNRNP200; these interactions may be indirect.

The protein resides in the nucleus. Functionally, component of the spliceosome A complex. Binds to ssRNA containing the consensus sequence 5'-AGGUAA-3'. Regulates alternative splicing of a number of mRNAs. May modulate splice site pairing after recruitment of the U1 and U2 snRNPs to the 5' and 3' splice sites of the intron. May both positively and negatively regulate apoptosis by regulating the alternative splicing of several genes involved in this process, including FAS and CASP2/caspase-2. In the case of FAS, promotes production of a soluble form of FAS that inhibits apoptosis. In the case of CASP2/caspase-2, promotes production of a catalytically active form of CASP2/Caspase-2 that induces apoptosis. The protein is RNA-binding protein 5 (Rbm5) of Mus musculus (Mouse).